The primary structure comprises 29 residues: Dermaseptin-S5 (29 aa).

This sequence belongs to the frog skin active peptide (FSAP) family. Dermaseptin subfamily. In terms of tissue distribution, expressed by the skin glands.

The protein resides in the secreted. Functionally, potent antimicrobial peptide with activity against bacteria and protozoa. Also has activity against fungi. Probably acts by disturbing membrane functions with its amphipathic structure. This Phyllomedusa sauvagei (Sauvage's leaf frog) protein is Dermaseptin-S5.